The chain runs to 346 residues: Coproporphyrin III ferrochelatase (346 aa).

2 residues coordinate Fe-coproporphyrin III: Ser52 and Tyr121. Fe(2+) contacts are provided by His181 and Glu264.

Belongs to the ferrochelatase family.

It localises to the cytoplasm. The enzyme catalyses Fe-coproporphyrin III + 2 H(+) = coproporphyrin III + Fe(2+). The protein operates within porphyrin-containing compound metabolism; protoheme biosynthesis. Its function is as follows. Involved in coproporphyrin-dependent heme b biosynthesis. Catalyzes the insertion of ferrous iron into coproporphyrin III to form Fe-coproporphyrin III. The protein is Coproporphyrin III ferrochelatase of Mycobacterium sp. (strain JLS).